The following is a 217-amino-acid chain: Large ribosomal subunit protein uL1 (217 aa).

It belongs to the universal ribosomal protein uL1 family. In terms of assembly, part of the 50S ribosomal subunit.

Its function is as follows. Binds directly to 23S rRNA. Probably involved in E site tRNA release. Protein L1 is also a translational repressor protein, it controls the translation of its operon by binding to its mRNA. This is Large ribosomal subunit protein uL1 from Thermoplasma acidophilum (strain ATCC 25905 / DSM 1728 / JCM 9062 / NBRC 15155 / AMRC-C165).